Here is a 658-residue protein sequence, read N- to C-terminus: UvrABC system protein B (658 aa).

Residues 25-178 (KSLKNKNHYQ…KSFLLKLVEM (154 aa)) form the Helicase ATP-binding domain. 38 to 45 (GVTGSGKT) provides a ligand contact to ATP. A Beta-hairpin motif is present at residues 91-114 (HFDYYQPESYIPRRDLFIEKDSSI). A Helicase C-terminal domain is found at 433–607 (QVQDLFDEIK…ELKLRDDETK (175 aa)). The UVR domain occupies 623-658 (EKIIKELDKKMRECAKNLDFEEAMHLRDEIAKLRTL).

It belongs to the UvrB family. In terms of assembly, forms a heterotetramer with UvrA during the search for lesions. Interacts with UvrC in an incision complex.

It localises to the cytoplasm. Functionally, the UvrABC repair system catalyzes the recognition and processing of DNA lesions. A damage recognition complex composed of 2 UvrA and 2 UvrB subunits scans DNA for abnormalities. Upon binding of the UvrA(2)B(2) complex to a putative damaged site, the DNA wraps around one UvrB monomer. DNA wrap is dependent on ATP binding by UvrB and probably causes local melting of the DNA helix, facilitating insertion of UvrB beta-hairpin between the DNA strands. Then UvrB probes one DNA strand for the presence of a lesion. If a lesion is found the UvrA subunits dissociate and the UvrB-DNA preincision complex is formed. This complex is subsequently bound by UvrC and the second UvrB is released. If no lesion is found, the DNA wraps around the other UvrB subunit that will check the other stand for damage. The polypeptide is UvrABC system protein B (Helicobacter acinonychis (strain Sheeba)).